The primary structure comprises 177 residues: ATP synthase subunit delta (177 aa).

Belongs to the ATPase delta chain family. In terms of assembly, F-type ATPases have 2 components, F(1) - the catalytic core - and F(0) - the membrane proton channel. F(1) has five subunits: alpha(3), beta(3), gamma(1), delta(1), epsilon(1). F(0) has three main subunits: a(1), b(2) and c(10-14). The alpha and beta chains form an alternating ring which encloses part of the gamma chain. F(1) is attached to F(0) by a central stalk formed by the gamma and epsilon chains, while a peripheral stalk is formed by the delta and b chains.

The protein localises to the cell membrane. F(1)F(0) ATP synthase produces ATP from ADP in the presence of a proton or sodium gradient. F-type ATPases consist of two structural domains, F(1) containing the extramembraneous catalytic core and F(0) containing the membrane proton channel, linked together by a central stalk and a peripheral stalk. During catalysis, ATP synthesis in the catalytic domain of F(1) is coupled via a rotary mechanism of the central stalk subunits to proton translocation. Functionally, this protein is part of the stalk that links CF(0) to CF(1). It either transmits conformational changes from CF(0) to CF(1) or is implicated in proton conduction. This Carboxydothermus hydrogenoformans (strain ATCC BAA-161 / DSM 6008 / Z-2901) protein is ATP synthase subunit delta.